The primary structure comprises 347 residues: CCN family member 2 (347 aa).

A signal peptide spans Met1 to Gly24. Positions Gln25–Lys96 constitute an IGFBP N-terminal domain. Cystine bridges form between Cys27/Cys52, Cys31/Cys54, Cys33/Cys55, Cys41/Cys58, Cys66/Cys80, and Cys72/Cys93. In terms of domain architecture, VWFC spans Ala99–Asp165. The 46-residue stretch at Asn196–Glu241 folds into the TSP type-1 domain. A heparin-binding region spans residues Glu245 to Ala347. 5 disulfide bridges follow: Cys254-Cys291, Cys271-Cys305, Cys282-Cys321, Cys285-Cys323, and Cys290-Cys327. The 75-residue stretch at Cys254–Pro328 folds into the CTCK domain.

Belongs to the CCN family. Monomer. Interacts with TSKU.

It localises to the secreted. The protein resides in the extracellular space. Its subcellular location is the extracellular matrix. Major connective tissue mitoattractant secreted by vascular endothelial cells. Promotes proliferation and differentiation of chondrocytes. Is involved in the stimulation of osteoblast differentiation and has a critical role in osteogenesis. Mediates heparin- and divalent cation-dependent cell adhesion in many cell types including fibroblasts, myofibroblasts, endothelial and epithelial cells. Enhances fibroblast growth factor-induced DNA synthesis. In Rattus norvegicus (Rat), this protein is CCN family member 2.